A 585-amino-acid polypeptide reads, in one-letter code: Lipoprotein LpqB (585 aa).

A signal peptide spans 1-17 (MGRKLLGLLMLAVLLAG). A lipid anchor (N-palmitoyl cysteine) is attached at cysteine 18. Cysteine 18 carries S-diacylglycerol cysteine lipidation. Disordered regions lie at residues 24 to 48 (SSAPQAIGTVERPAPSNLPKPTPGM) and 560 to 585 (PSADGQQGWSEVPGLTVPGAAPVLPG).

This sequence belongs to the LpqB lipoprotein family.

Its subcellular location is the cell membrane. This Mycolicibacterium paratuberculosis (strain ATCC BAA-968 / K-10) (Mycobacterium paratuberculosis) protein is Lipoprotein LpqB.